A 590-amino-acid polypeptide reads, in one-letter code: ATP-dependent lipid A-core flippase (590 aa).

6 helical membrane-spanning segments follow: residues 31–51, 74–94, 132–152, 159–179, 259–279, and 286–306; these read IFIAAILAMAVVAASEGVIPK, AILTGVALIRGVAQFASGYLL, AVIFEVNQVLSILTSVFITLV, VALLIYLFYTNWRLTLIVSVI, VTAFLAALALSVIITIAMIQA, and IGGFTGFVMAMLLLISPLKHL. In terms of domain architecture, ABC transmembrane type-1 spans 33–315; sequence IAAILAMAVV…LTDINQPLTR (283 aa). The region spanning 347–585 is the ABC transporter domain; it reads LVFERVGFRY…NGLYAGLHRI (239 aa). 381–388 lines the ATP pocket; it reads GPSGSGKT.

It belongs to the ABC transporter superfamily. Lipid exporter (TC 3.A.1.106) family. Homodimer.

It localises to the cell inner membrane. The catalysed reaction is ATP + H2O + lipid A-core oligosaccharideSide 1 = ADP + phosphate + lipid A-core oligosaccharideSide 2.. Involved in lipopolysaccharide (LPS) biosynthesis. Translocates lipid A-core from the inner to the outer leaflet of the inner membrane. Transmembrane domains (TMD) form a pore in the inner membrane and the ATP-binding domain (NBD) is responsible for energy generation. This is ATP-dependent lipid A-core flippase from Cupriavidus pinatubonensis (strain JMP 134 / LMG 1197) (Cupriavidus necator (strain JMP 134)).